The chain runs to 61 residues: Sec-independent protein translocase protein TatA (61 aa).

Residues 2-22 (GLSGISPLSLLLILAIIVALF) traverse the membrane as a helical segment.

This sequence belongs to the TatA/E family. In terms of assembly, the Tat system comprises two distinct complexes: a TatABC complex, containing multiple copies of TatA, TatB and TatC subunits, and a separate TatA complex, containing only TatA subunits. Substrates initially bind to the TatABC complex, which probably triggers association of the separate TatA complex to form the active translocon.

It is found in the cell inner membrane. Its function is as follows. Part of the twin-arginine translocation (Tat) system that transports large folded proteins containing a characteristic twin-arginine motif in their signal peptide across membranes. TatA could form the protein-conducting channel of the Tat system. The polypeptide is Sec-independent protein translocase protein TatA (Legionella pneumophila (strain Paris)).